The following is a 417-amino-acid chain: Hydroxysteroid dehydrogenase-like protein 2 (417 aa).

NADP(+) is bound by residues 17–23, Lys-42, and Asp-74; that span reads GASRGIG. Residue Tyr-168 is the Proton acceptor of the active site. NADP(+) is bound at residue Lys-172. The SCP2 domain occupies 306-414; sequence SSPLQETFKA…KLEKILGQMN (109 aa).

Belongs to the short-chain dehydrogenases/reductases (SDR) family.

The protein resides in the peroxisome. It localises to the mitochondrion. Its function is as follows. Has apparently no steroid dehydrogenase activity. Might act as a metabolic regulator that affects systemic adaptation to nutritional cues. The protein is Hydroxysteroid dehydrogenase-like protein 2 (hsdl2) of Xenopus tropicalis (Western clawed frog).